Reading from the N-terminus, the 239-residue chain is Glucosamine-6-phosphate deaminase (239 aa).

The Proton acceptor; for enolization step role is filled by Asp62. Residue Asn128 is the For ring-opening step of the active site. His130 acts as the Proton acceptor; for ring-opening step in catalysis. Glu135 functions as the For ring-opening step in the catalytic mechanism.

This sequence belongs to the glucosamine/galactosamine-6-phosphate isomerase family. NagB subfamily.

It carries out the reaction alpha-D-glucosamine 6-phosphate + H2O = beta-D-fructose 6-phosphate + NH4(+). Its pathway is amino-sugar metabolism; N-acetylneuraminate degradation; D-fructose 6-phosphate from N-acetylneuraminate: step 5/5. Catalyzes the reversible isomerization-deamination of glucosamine 6-phosphate (GlcN6P) to form fructose 6-phosphate (Fru6P) and ammonium ion. This is Glucosamine-6-phosphate deaminase from Lactobacillus acidophilus (strain ATCC 700396 / NCK56 / N2 / NCFM).